The primary structure comprises 286 residues: Protein N-terminal amidase (286 aa).

Positions 1-286 (MKFGCVQFFP…NGIVVGELEK (286 aa)) constitute a CN hydrolase domain. Residue glutamate 43 is the Proton acceptor of the active site. Catalysis depends on lysine 121, which acts as the Proton donor. Catalysis depends on cysteine 155, which acts as the Nucleophile.

The protein belongs to the carbon-nitrogen hydrolase superfamily.

The protein localises to the cytoplasm. It localises to the nucleus. Its function is as follows. Deamidates N-terminal Asn and Gln. Component of a targeting complex in the N-end rule pathway. This chain is Protein N-terminal amidase (nta1), found in Schizosaccharomyces pombe (strain 972 / ATCC 24843) (Fission yeast).